The following is a 331-amino-acid chain: tRNA N6-adenosine threonylcarbamoyltransferase (331 aa).

A divalent metal cation is bound by residues histidine 108, histidine 112, and tyrosine 129. Substrate-binding positions include tyrosine 129–glycine 133, aspartate 161, glycine 176, glutamate 180, and asparagine 261. Aspartate 289 contacts a divalent metal cation.

Belongs to the KAE1 / TsaD family. Component of the EKC/KEOPS complex composed of at least BUD32, CGI121, GON7, KAE1 and PCC1; the whole complex dimerizes. Requires a divalent metal cation as cofactor.

It is found in the cytoplasm. It localises to the nucleus. It catalyses the reaction L-threonylcarbamoyladenylate + adenosine(37) in tRNA = N(6)-L-threonylcarbamoyladenosine(37) in tRNA + AMP + H(+). Functionally, component of the EKC/KEOPS complex that is required for the formation of a threonylcarbamoyl group on adenosine at position 37 (t(6)A37) in tRNAs that read codons beginning with adenine. The complex is probably involved in the transfer of the threonylcarbamoyl moiety of threonylcarbamoyl-AMP (TC-AMP) to the N6 group of A37. KAE1 likely plays a direct catalytic role in this reaction, but requires other protein(s) of the complex to fulfill this activity. The EKC/KEOPS complex also promotes both telomere uncapping and telomere elongation. The complex is required for efficient recruitment of transcriptional coactivators. This is tRNA N6-adenosine threonylcarbamoyltransferase from Encephalitozoon cuniculi (strain GB-M1) (Microsporidian parasite).